A 117-amino-acid chain; its full sequence is Large ribosomal subunit protein bL19 (117 aa).

Belongs to the bacterial ribosomal protein bL19 family.

In terms of biological role, this protein is located at the 30S-50S ribosomal subunit interface and may play a role in the structure and function of the aminoacyl-tRNA binding site. This is Large ribosomal subunit protein bL19 from Leptothrix cholodnii (strain ATCC 51168 / LMG 8142 / SP-6) (Leptothrix discophora (strain SP-6)).